A 147-amino-acid polypeptide reads, in one-letter code: Ponticulin-like protein C5 (147 aa).

An N-terminal signal peptide occupies residues 1-20; it reads MKLNNSLLLLIVAIIASSNA. A lipid anchor (GPI-like-anchor amidated asparagine) is attached at Asn118. Asn118 carries N-linked (GlcNAc...) asparagine glycosylation. Positions 119 to 147 are cleaved as a propeptide — removed in mature form; sequence SSESDSSDSTRIGASFALFALALLSMLAL.

This sequence belongs to the ponticulin family. In terms of processing, the GPI-like-anchor contains a phosphoceramide group, rather than a phosphatidyl group.

The protein resides in the cell membrane. This is Ponticulin-like protein C5 (ponC5) from Dictyostelium discoideum (Social amoeba).